A 367-amino-acid polypeptide reads, in one-letter code: tRNA-specific 2-thiouridylase MnmA (367 aa).

ATP-binding positions include 6 to 13 (AMSGGVDS) and methionine 32. Cysteine 101 acts as the Nucleophile in catalysis. Residues cysteine 101 and cysteine 193 are joined by a disulfide bond. Position 125 (glycine 125) interacts with ATP. The tract at residues 143–145 (KDQ) is interaction with tRNA. Cysteine 193 functions as the Cysteine persulfide intermediate in the catalytic mechanism.

This sequence belongs to the MnmA/TRMU family.

Its subcellular location is the cytoplasm. It catalyses the reaction S-sulfanyl-L-cysteinyl-[protein] + uridine(34) in tRNA + AH2 + ATP = 2-thiouridine(34) in tRNA + L-cysteinyl-[protein] + A + AMP + diphosphate + H(+). Catalyzes the 2-thiolation of uridine at the wobble position (U34) of tRNA, leading to the formation of s(2)U34. The polypeptide is tRNA-specific 2-thiouridylase MnmA (Mycobacterium tuberculosis (strain CDC 1551 / Oshkosh)).